A 612-amino-acid chain; its full sequence is Actin-binding LIM protein 2 (612 aa).

LIM zinc-binding domains lie at 22–81 (ILCN…LYGT), 81–141 (TRCF…TLVG), 151–210 (RSCG…KFGI), and 210–270 (IRCD…ARTE). Residues cysteine 83, cysteine 86, histidine 103, cysteine 106, cysteine 109, cysteine 112, cysteine 131, and cysteine 134 each contribute to the Zn(2+) site. Residues cysteine 212, cysteine 215, histidine 232, cysteine 235, cysteine 238, cysteine 241, histidine 260, and cysteine 263 each coordinate Zn(2+). The segment covering 269–278 (TEDKSKETRT) has biased composition (basic and acidic residues). Disordered stretches follow at residues 269–295 (TEDK…SGSP) and 341–433 (AVGD…DNIY). 2 stretches are compositionally biased toward low complexity: residues 279–295 (SSES…SGSP) and 364–373 (SSPSSAGSVS). Phosphoserine is present on residues serine 282, serine 294, serine 365, and serine 368. Over residues 394–416 (SGRSTPSLSVHSDSRPPSSTYQQ) the composition is skewed to polar residues. A Phosphoserine modification is found at serine 453. The segment at 471–520 (ADTRTNSPDLDSQSLSLSSGADQEPLQRMPGDSLYSRFPYSKPDTLPGPR) is disordered. Position 473 is a phosphothreonine (threonine 473). 2 positions are modified to phosphoserine: serine 477 and serine 579. Residues 477 to 489 (SPDLDSQSLSLSS) show a composition bias toward low complexity. The region spanning 544–612 (TREYKIYPYD…NDLKKKALLF (69 aa)) is the HP domain.

Interacts with F-actin and ABRA.

It localises to the cytoplasm. Functionally, may act as scaffold protein. May stimulate ABRA activity and ABRA-dependent SRF transcriptional activity. The polypeptide is Actin-binding LIM protein 2 (Ablim2) (Rattus norvegicus (Rat)).